The following is a 928-amino-acid chain: 2-oxoglutarate dehydrogenase E1 component (928 aa).

This sequence belongs to the alpha-ketoglutarate dehydrogenase family. Homodimer. Part of the 2-oxoglutarate dehydrogenase (OGDH) complex composed of E1 (2-oxoglutarate dehydrogenase), E2 (dihydrolipoamide succinyltransferase) and E3 (dihydrolipoamide dehydrogenase); the complex contains multiple copies of the three enzymatic components (E1, E2 and E3). Thiamine diphosphate is required as a cofactor.

It carries out the reaction N(6)-[(R)-lipoyl]-L-lysyl-[protein] + 2-oxoglutarate + H(+) = N(6)-[(R)-S(8)-succinyldihydrolipoyl]-L-lysyl-[protein] + CO2. Its function is as follows. E1 component of the 2-oxoglutarate dehydrogenase (OGDH) complex which catalyzes the decarboxylation of 2-oxoglutarate, the first step in the conversion of 2-oxoglutarate to succinyl-CoA and CO(2). This chain is 2-oxoglutarate dehydrogenase E1 component (sucA), found in Rickettsia conorii (strain ATCC VR-613 / Malish 7).